A 135-amino-acid chain; its full sequence is Small ribosomal subunit protein uS11 (135 aa).

It belongs to the universal ribosomal protein uS11 family. Part of the 30S ribosomal subunit. Interacts with proteins S7 and S18. Binds to IF-3.

Functionally, located on the platform of the 30S subunit, it bridges several disparate RNA helices of the 16S rRNA. Forms part of the Shine-Dalgarno cleft in the 70S ribosome. The chain is Small ribosomal subunit protein uS11 from Cutibacterium acnes (strain DSM 16379 / KPA171202) (Propionibacterium acnes).